The sequence spans 66 residues: Large ribosomal subunit protein bL33c (66 aa).

It belongs to the bacterial ribosomal protein bL33 family.

It localises to the plastid. The protein localises to the chloroplast. The sequence is that of Large ribosomal subunit protein bL33c from Coffea arabica (Arabian coffee).